A 203-amino-acid polypeptide reads, in one-letter code: Ribonuclease HII (203 aa).

The region spanning 18–203 (GHYAGVDEVG…SFRPVREALA (186 aa)) is the RNase H type-2 domain. Aspartate 24, glutamate 25, and aspartate 116 together coordinate a divalent metal cation.

Belongs to the RNase HII family. Requires Mn(2+) as cofactor. Mg(2+) is required as a cofactor.

The protein resides in the cytoplasm. The enzyme catalyses Endonucleolytic cleavage to 5'-phosphomonoester.. In terms of biological role, endonuclease that specifically degrades the RNA of RNA-DNA hybrids. The protein is Ribonuclease HII of Shewanella halifaxensis (strain HAW-EB4).